A 134-amino-acid chain; its full sequence is Arsenate reductase (134 aa).

Residues Cys11, Cys83, and Cys90 each act as nucleophile in the active site. Cystine bridges form between Cys11-Cys83 and Cys83-Cys90.

Belongs to the low molecular weight phosphotyrosine protein phosphatase family. Thioredoxin-coupled ArsC subfamily.

Its subcellular location is the cytoplasm. It carries out the reaction arsenate + [thioredoxin]-dithiol + H(+) = arsenite + [thioredoxin]-disulfide + H2O. Its function is as follows. Catalyzes the reduction of arsenate [As(V)] to arsenite [As(III)]. The chain is Arsenate reductase from Bacillus anthracis (strain A0248).